The following is a 97-amino-acid chain: uncharacterized protein (97 aa).

Residues 1 to 16 form the signal peptide; the sequence is MKQTVLLLFTALFLSG. Residue Cys-17 is the site of N-palmitoyl cysteine attachment. Cys-17 carries S-diacylglycerol cysteine lipidation.

The protein localises to the cell membrane. This is an uncharacterized protein from Bacillus subtilis (strain 168).